We begin with the raw amino-acid sequence, 667 residues long: Transmembrane 9 superfamily member 1 (667 aa).

An N-terminal signal peptide occupies residues 1-22 (MIYKMAHVQLLLLYFFVSTVKA). Over 23–302 (FYLPGVAPTT…DKYLHVYDPS (280 aa)) the chain is Lumenal. N-linked (GlcNAc...) asparagine glycans are attached at residues asparagine 61 and asparagine 282. A helical transmembrane segment spans residues 303 to 323 (IQWFSLINFSLVVVLLSSVVI). Over 324–370 (HSLLRALKSDFARYNELNLDDDFQEDSGWKLNHGDVFRSPSQSLTLS) the chain is Cytoplasmic. A helical transmembrane segment spans residues 371–391 (ILVGSGVQLFLMVTCSIFFAA). Over 392 to 405 (LGFLSPSSRGSLAT) the chain is Lumenal. The helical transmembrane segment at 406-426 (VMFILYALFGFVGSYTSMGIY) threads the bilayer. Over 427 to 442 (KFFNGPYWKANLILTP) the chain is Cytoplasmic. The helical transmembrane segment at 443–463 (LLVPGAILLIIIALNFFLMFV) threads the bilayer. Residues 464 to 474 (HSSGVIPASTL) lie on the Lumenal side of the membrane. A helical transmembrane segment spans residues 475–495 (FFMVFLWFLFSIPLSFAGSLI). The Cytoplasmic segment spans residues 496–527 (ARKRCHWDEHPTKTNQIARQIPFQPWYLKTIP). Residues 528-548 (ATLIAGIFPFGSIAVELYFIY) form a helical membrane-spanning segment. At 549–560 (TSLWFNKIFYMF) the chain is on the lumenal side. The helical transmembrane segment at 561-581 (GFLFFSFLLLTLTSSLVTILI) threads the bilayer. Topologically, residues 582–596 (TYHSLCLENWKWQWR) are cytoplasmic. A helical transmembrane segment spans residues 597–617 (GFIIGGAGCALYVFIHSILFT). Residues 618–635 (KFKLGGFTTIVLYVGYSS) lie on the Lumenal side of the membrane. A helical membrane pass occupies residues 636–656 (VISLLCCLVTGSIGFISSMLF). Topologically, residues 657 to 667 (VRKIYSSIKVD) are cytoplasmic.

Belongs to the nonaspanin (TM9SF) (TC 9.A.2) family.

It is found in the endosome membrane. Its subcellular location is the vacuole membrane. Functionally, with TMN2 and TMN3, plays a critical role in the late stages of a nutrient-controlled pathway notably regulating FLO11 gene expression. Acts downstream of RAS2 and TOR. Essential for cell adhesion and filamentous growth. May play a role as effector of cellular copper homeostasis. The chain is Transmembrane 9 superfamily member 1 (EMP70) from Saccharomyces cerevisiae (strain ATCC 204508 / S288c) (Baker's yeast).